We begin with the raw amino-acid sequence, 663 residues long: Oxytetracycline resistance protein (663 aa).

A tr-type G domain is found at 1 to 252 (MNKLNLGILA…GIRELLPSVH (252 aa)). Residues 10–17 (AHVDAGKT), 74–78 (DTPGH), and 128–131 (NKID) each bind GTP.

Belongs to the TRAFAC class translation factor GTPase superfamily. Classic translation factor GTPase family. TetM/TetO subfamily.

In terms of biological role, abolishes the inhibitory effect of oxytetracycline on protein synthesis by a non-covalent modification of the ribosomes. The protein is Oxytetracycline resistance protein (otrA) of Streptomyces rimosus.